The primary structure comprises 62 residues: Potassium channel toxin alpha-KTx 10.1 (62 aa).

Positions 1–22 (MEGIAKITLILLFLFVTMHTFA) are cleaved as a signal peptide. The propeptide occupies 23–28 (NWNTEA). Intrachain disulfides connect Cys31/Cys50, Cys36/Cys55, and Cys40/Cys57. Tyrosine amide is present on Tyr60.

The protein belongs to the short scorpion toxin superfamily. Potassium channel inhibitor family. Alpha-KTx 10 subfamily. As to expression, expressed by the venom gland.

Its subcellular location is the secreted. In terms of biological role, blocks Shaker B (Sh) and voltage-gated potassium-channels Kv1.1/KCNA1, Kv1.2/KCNA2, Kv1.3/KCNA3. Also inhibits small conductance calcium-activated potassium channels (KCNN) and intermediate conductance calcium-activated potassium channel (KCa3.1/KCNN4). The protein is Potassium channel toxin alpha-KTx 10.1 of Centruroides noxius (Mexican scorpion).